A 321-amino-acid polypeptide reads, in one-letter code: Beta-ketoacyl-[acyl-carrier-protein] synthase III (321 aa).

Catalysis depends on residues C113 and H246. Residues 247–251 (QANVR) form an ACP-binding region. The active site involves N276.

This sequence belongs to the thiolase-like superfamily. FabH family. In terms of assembly, homodimer.

It localises to the cytoplasm. It catalyses the reaction malonyl-[ACP] + acetyl-CoA + H(+) = 3-oxobutanoyl-[ACP] + CO2 + CoA. It functions in the pathway lipid metabolism; fatty acid biosynthesis. Catalyzes the condensation reaction of fatty acid synthesis by the addition to an acyl acceptor of two carbons from malonyl-ACP. Catalyzes the first condensation reaction which initiates fatty acid synthesis and may therefore play a role in governing the total rate of fatty acid production. Possesses both acetoacetyl-ACP synthase and acetyl transacylase activities. Its substrate specificity determines the biosynthesis of branched-chain and/or straight-chain of fatty acids. The polypeptide is Beta-ketoacyl-[acyl-carrier-protein] synthase III (Enterococcus faecalis (strain ATCC 700802 / V583)).